The following is a 122-amino-acid chain: Large ribosomal subunit protein bL12 (122 aa).

The protein belongs to the bacterial ribosomal protein bL12 family. Homodimer. Part of the ribosomal stalk of the 50S ribosomal subunit. Forms a multimeric L10(L12)X complex, where L10 forms an elongated spine to which 2 to 4 L12 dimers bind in a sequential fashion. Binds GTP-bound translation factors.

Functionally, forms part of the ribosomal stalk which helps the ribosome interact with GTP-bound translation factors. Is thus essential for accurate translation. This is Large ribosomal subunit protein bL12 from Histophilus somni (strain 129Pt) (Haemophilus somnus).